Reading from the N-terminus, the 451-residue chain is Chromosomal replication initiator protein DnaA (451 aa).

The domain I, interacts with DnaA modulators stretch occupies residues 1–72; sequence MQSIEDIWQE…ANILQEITGR (72 aa). The tract at residues 72-108 is domain II; that stretch reads RLFDVRFIDGEQEENFEYTVIKPNPALDEDGVEIGKH. The domain III, AAA+ region stretch occupies residues 109–325; the sequence is MLNPRYVFDT…GALIRVVAYS (217 aa). 4 residues coordinate ATP: G153, G155, K156, and T157. A domain IV, binds dsDNA region spans residues 326-451; that stretch reads SLVNKDITAG…KNLRKAQNMF (126 aa).

Belongs to the DnaA family. Oligomerizes as a right-handed, spiral filament on DNA at oriC.

It localises to the cytoplasm. In terms of biological role, plays an essential role in the initiation and regulation of chromosomal replication. ATP-DnaA binds to the origin of replication (oriC) to initiate formation of the DNA replication initiation complex once per cell cycle. Binds the DnaA box (a 9 base pair repeat at the origin) and separates the double-stranded (ds)DNA. Forms a right-handed helical filament on oriC DNA; dsDNA binds to the exterior of the filament while single-stranded (ss)DNA is stabiized in the filament's interior. The ATP-DnaA-oriC complex binds and stabilizes one strand of the AT-rich DNA unwinding element (DUE), permitting loading of DNA polymerase. After initiation quickly degrades to an ADP-DnaA complex that is not apt for DNA replication. Binds acidic phospholipids. This Listeria monocytogenes serotype 4b (strain CLIP80459) protein is Chromosomal replication initiator protein DnaA.